The primary structure comprises 283 residues: Elongation factor Ts (283 aa).

An involved in Mg(2+) ion dislocation from EF-Tu region spans residues 79–82 (TDFV).

Belongs to the EF-Ts family.

The protein resides in the cytoplasm. Functionally, associates with the EF-Tu.GDP complex and induces the exchange of GDP to GTP. It remains bound to the aminoacyl-tRNA.EF-Tu.GTP complex up to the GTP hydrolysis stage on the ribosome. This chain is Elongation factor Ts, found in Shewanella denitrificans (strain OS217 / ATCC BAA-1090 / DSM 15013).